Reading from the N-terminus, the 144-residue chain is 3-dehydroquinate dehydratase (144 aa).

Y22 acts as the Proton acceptor in catalysis. Positions 73, 79, and 86 each coordinate substrate. The Proton donor role is filled by H99. Residues 100–101 (LS) and R110 contribute to the substrate site.

The protein belongs to the type-II 3-dehydroquinase family. Homododecamer.

It catalyses the reaction 3-dehydroquinate = 3-dehydroshikimate + H2O. The protein operates within metabolic intermediate biosynthesis; chorismate biosynthesis; chorismate from D-erythrose 4-phosphate and phosphoenolpyruvate: step 3/7. In terms of biological role, catalyzes a trans-dehydration via an enolate intermediate. This is 3-dehydroquinate dehydratase from Trichlorobacter lovleyi (strain ATCC BAA-1151 / DSM 17278 / SZ) (Geobacter lovleyi).